A 392-amino-acid chain; its full sequence is Protein Wnt-1 (392 aa).

The signal sequence occupies residues 1 to 16 (MKCLWLLVITVLCLRC). 11 disulfides stabilise this stretch: C89–C100, C142–C150, C152–C179, C227–C241, C229–C236, C321–C352, C337–C347, C351–C391, C367–C382, C369–C379, and C374–C375. A glycan (N-linked (GlcNAc...) asparagine) is linked at N99. S233 is lipidated: O-palmitoleoyl serine; by PORCN. N-linked (GlcNAc...) asparagine glycosylation is found at N338 and N368.

The protein belongs to the Wnt family. Post-translationally, palmitoleoylated by porcupine. The lipid group functions as a sorting signal, targeting the ligand to polarized vesicles that transport WNT-1 to unique sites at the cell surface. Depalmitoleoylated by notum, leading to inhibit Wnt signaling pathway.

Its subcellular location is the secreted. It is found in the extracellular space. It localises to the extracellular matrix. Ligand for members of the frizzled family of seven transmembrane receptors. Probable developmental protein. The sequence is that of Protein Wnt-1 (WNT-1) from Bombyx mori (Silk moth).